Reading from the N-terminus, the 421-residue chain is MDKLIITGGVRLDGEIRISGAKNSALPILAATLLCDGPVTVANLPHLHDITTMIELFGRMGIEPVIDEKLSVEIDPRTIKTLVAPYELVKTMRASILVLGPMVARFGEAEVALPGGCAIGSRPVDLHIRGLEAMGAVIDVEGGYIKAKAPEGGLRGANFFFDTVSVTGTENIMMAAALARGRSVLQNAAREPEVVDLANFLIAMGAKISGAGTDTITIDGVERLHSAIYKVMPDRIETGTYLVAAAVTGGRVKVKDTDPTILEAVLEKLKEAGAEVTTGSDWIELNMHGKRPKAVNVRTAPYPAFPTDMQAQFISLNAIAEGTGAVIETIFENRFMHVYELHRMGAKIQVEGNTAIVTGTEILKGAPVMATDLRASASLVISALMAEGDTLIDRIYHIDRGYECIEEKLQMLGAKIRRVPG.

Position 22-23 (22-23) interacts with phosphoenolpyruvate; that stretch reads KN. Arg-93 serves as a coordination point for UDP-N-acetyl-alpha-D-glucosamine. Cys-117 (proton donor) is an active-site residue. Cys-117 is modified (2-(S-cysteinyl)pyruvic acid O-phosphothioketal). Residues 122–126, Asp-308, and Ile-330 contribute to the UDP-N-acetyl-alpha-D-glucosamine site; that span reads RPVDL.

Belongs to the EPSP synthase family. MurA subfamily.

Its subcellular location is the cytoplasm. It carries out the reaction phosphoenolpyruvate + UDP-N-acetyl-alpha-D-glucosamine = UDP-N-acetyl-3-O-(1-carboxyvinyl)-alpha-D-glucosamine + phosphate. The protein operates within cell wall biogenesis; peptidoglycan biosynthesis. Functionally, cell wall formation. Adds enolpyruvyl to UDP-N-acetylglucosamine. The protein is UDP-N-acetylglucosamine 1-carboxyvinyltransferase of Pseudomonas fluorescens (strain ATCC BAA-477 / NRRL B-23932 / Pf-5).